A 79-amino-acid polypeptide reads, in one-letter code: Protein Vpu (79 aa).

The Extracellular segment spans residues Met-1–Leu-7. A helical membrane pass occupies residues Gly-8–Arg-28. Residues Ile-29 to Val-79 lie on the Cytoplasmic side of the membrane. Residues Asp-48–Val-79 form a disordered region. Phosphoserine; by host CK2 occurs at positions 53 and 57. Acidic residues predominate over residues Ser-53–Glu-63.

It belongs to the HIV-1 VPU protein family. As to quaternary structure, homopentamer. Interacts with host CD4 and BRTC; these interactions induce proteasomal degradation of CD4. Interacts with host BST2; this interaction leads to the degradation of host BST2. Interacts with host FBXW11. Interacts with host AP1M1; this interaction plays a role in the mistrafficking and subsequent degradation of host BST2. Interacts with host RANBP2; this interaction allows Vpu to down-regulate host BLM sumoylation. In terms of processing, phosphorylated by host CK2. This phosphorylation is necessary for interaction with human BTRC and degradation of CD4.

It is found in the host membrane. With respect to regulation, ion channel activity is inhibited by hexamethylene amiloride in vitro. Its function is as follows. Enhances virion budding by targeting host CD4 and Tetherin/BST2 to proteasome degradation. Degradation of CD4 prevents any unwanted premature interactions between viral Env and its host receptor CD4 in the endoplasmic reticulum. Degradation of antiretroviral protein Tetherin/BST2 is important for virion budding, as BST2 tethers new viral particles to the host cell membrane. Mechanistically, Vpu bridges either CD4 or BST2 to BTRC, a substrate recognition subunit of the Skp1/Cullin/F-box protein E3 ubiquitin ligase, induces their ubiquitination and subsequent proteasomal degradation. The alteration of the E3 ligase specificity by Vpu seems to promote the degradation of host IKBKB, leading to NF-kappa-B down-regulation and subsequent apoptosis. Acts as a viroporin that forms an oligomeric ion channel in membranes. Modulates the host DNA repair mechanisms to promote degradation of nuclear viral cDNA in cells that are already productively infected in order to suppress immune sensing and proviral hyper-integration (superinfection). Manipulates PML-NBs and modulates SUMOylation of host BLM protein thereby enhancing its DNA-end processing activity toward viral unintegrated linear DNA. Also inhibits RAD52-mediated homologous repair of viral cDNA, preventing the generation of dead-end circular forms of single copies of the long terminal repeat and permitting sustained nucleolytic attack. This Pan troglodytes (Chimpanzee) protein is Protein Vpu.